The sequence spans 252 residues: 5'-nucleotidase SurE (252 aa).

The a divalent metal cation site is built by Asp-8, Asp-9, Ser-39, and Asn-95.

It belongs to the SurE nucleotidase family. The cofactor is a divalent metal cation.

It is found in the cytoplasm. The enzyme catalyses a ribonucleoside 5'-phosphate + H2O = a ribonucleoside + phosphate. Nucleotidase that shows phosphatase activity on nucleoside 5'-monophosphates. The sequence is that of 5'-nucleotidase SurE from Thermoanaerobacter sp. (strain X514).